Consider the following 349-residue polypeptide: Phosphoribosylformylglycinamidine cyclo-ligase (349 aa).

It belongs to the AIR synthase family.

It is found in the cytoplasm. It catalyses the reaction 2-formamido-N(1)-(5-O-phospho-beta-D-ribosyl)acetamidine + ATP = 5-amino-1-(5-phospho-beta-D-ribosyl)imidazole + ADP + phosphate + H(+). It functions in the pathway purine metabolism; IMP biosynthesis via de novo pathway; 5-amino-1-(5-phospho-D-ribosyl)imidazole from N(2)-formyl-N(1)-(5-phospho-D-ribosyl)glycinamide: step 2/2. The chain is Phosphoribosylformylglycinamidine cyclo-ligase from Listeria monocytogenes serotype 4b (strain CLIP80459).